The sequence spans 332 residues: Fructose-1,6-bisphosphatase class 1 (332 aa).

The Mg(2+) site is built by glutamate 89, aspartate 110, leucine 112, and aspartate 113. Residues 113 to 116 (DGSS), asparagine 206, tyrosine 239, 257 to 259 (YLY), and lysine 269 contribute to the substrate site. Glutamate 275 provides a ligand contact to Mg(2+).

It belongs to the FBPase class 1 family. In terms of assembly, homotetramer. The cofactor is Mg(2+).

Its subcellular location is the cytoplasm. The enzyme catalyses beta-D-fructose 1,6-bisphosphate + H2O = beta-D-fructose 6-phosphate + phosphate. The protein operates within carbohydrate biosynthesis; gluconeogenesis. The chain is Fructose-1,6-bisphosphatase class 1 from Salmonella typhi.